The following is a 102-amino-acid chain: Small integral membrane protein 29 (102 aa).

An N-linked (GlcNAc...) asparagine glycan is attached at N3. A helical transmembrane segment spans residues 21 to 41 (VLGPFFLITLVGVVVAVVMYV).

The protein localises to the membrane. In Mus musculus (Mouse), this protein is Small integral membrane protein 29.